We begin with the raw amino-acid sequence, 360 residues long: uncharacterized protein (360 aa).

In terms of domain architecture, ABC transporter spans L4 to I235. G37–S44 provides a ligand contact to ATP.

It belongs to the ABC transporter superfamily.

This is an uncharacterized protein from Escherichia coli O6:H1 (strain CFT073 / ATCC 700928 / UPEC).